The primary structure comprises 482 residues: Membrane-bound lytic murein transglycosylase F (482 aa).

Positions 1–18 (MKGLFLRIITALALLFWA) are cleaved as a signal peptide. The segment at 19-267 (IDMVFPWQFL…NLKEKYLGHI (249 aa)) is non-LT domain. An LT domain region spans residues 268-482 (SQFDYVDTRS…NLEEIKENED (215 aa)). E312 is an active-site residue. The span at 457 to 470 (ENQTTNDNANNESA) shows a compositional bias: polar residues. A disordered region spans residues 457-482 (ENQTTNDNANNESAVKNLEEIKENED). Residues 473-482 (NLEEIKENED) show a composition bias toward basic and acidic residues.

This sequence in the N-terminal section; belongs to the bacterial solute-binding protein 3 family. In the C-terminal section; belongs to the transglycosylase Slt family.

It is found in the cell outer membrane. It catalyses the reaction Exolytic cleavage of the (1-&gt;4)-beta-glycosidic linkage between N-acetylmuramic acid (MurNAc) and N-acetylglucosamine (GlcNAc) residues in peptidoglycan, from either the reducing or the non-reducing ends of the peptidoglycan chains, with concomitant formation of a 1,6-anhydrobond in the MurNAc residue.. In terms of biological role, murein-degrading enzyme that degrades murein glycan strands and insoluble, high-molecular weight murein sacculi, with the concomitant formation of a 1,6-anhydromuramoyl product. Lytic transglycosylases (LTs) play an integral role in the metabolism of the peptidoglycan (PG) sacculus. Their lytic action creates space within the PG sacculus to allow for its expansion as well as for the insertion of various structures such as secretion systems and flagella. This is Membrane-bound lytic murein transglycosylase F from Haemophilus influenzae (strain PittGG).